Reading from the N-terminus, the 473-residue chain is Mogroside IIIx synthase (473 aa).

H43 functions as the Proton acceptor in the catalytic mechanism. D142 serves as the catalytic Charge relay. UDP-alpha-D-glucose is bound by residues S293, Q356, W374, N375, S376, E379, D395, and Q396.

It belongs to the UDP-glycosyltransferase family. Highly expressed in mature fruits.

It catalyses the reaction mogroside IIE + UDP-alpha-D-glucose = mogroside IIIX + UDP + H(+). The catalysed reaction is mogroside III + UDP-alpha-D-glucose = mogroside IV + UDP + H(+). The enzyme catalyses mogroside III + UDP-alpha-D-glucose = siamenoside I + UDP + H(+). It carries out the reaction mogroside IIIX + UDP-alpha-D-glucose = mogroside IVA + UDP + H(+). It catalyses the reaction mogroside IIIX + UDP-alpha-D-glucose = siamenoside I + UDP + H(+). The catalysed reaction is mogroside IV + UDP-alpha-D-glucose = mogroside V + UDP + H(+). The enzyme catalyses siamenoside I + UDP-alpha-D-glucose = mogroside V + UDP + H(+). It carries out the reaction mogroside V + UDP-alpha-D-glucose = mogroside VI + UDP + H(+). Its pathway is secondary metabolite biosynthesis; terpenoid biosynthesis. Its activity is regulated as follows. Activity is increased by Mg(2+). Functionally, UDP-glycosyltransferase involved in the biosynthesis of cucurbitacin and mogroside tetracyclic triterpene natural products (e.g. siamenoside I and mogrosides IV, V and VI). Cucurbitacins have cytotoxic properties and exhibit deterrent taste as a defense barrier against herbivores. Mogrosides are nonsugar highly oxygenated compounds used as high-intensity zero-calorie sweeteners; they also possess pharmacological properties such as regulating immunity, lowering blood sugar and lipid levels, protecting the liver, and acting as antioxidants and antitumor agents. In terms of biological role, catalyzes the branched glucosylations of mogroside II-E, mogroside III, mogroside IIIx, mogroside IV, mogroside IV-A, siamenoside I and mogroside V, ending in the production of mogroside VI. Catalyzes the beta(1-6) branched glucosylations of mogroside II-E to produce mogroside IIIx by forming a beta(1-6) glycosidic bond with the 6-hydroxyl of glucose 1-C24; a subsequent glycosylation at glucose 1-C3 leads to the formation of mogroside IV-A with beta(1-6) glycosidic bond. Can also use mogroside III-E, mogroside III-A, mogroside IV-E and mogroside IV-A as substrates. In Siraitia grosvenorii (Monk's fruit), this protein is Mogroside IIIx synthase.